The sequence spans 178 residues: DNA-directed RNA polymerase subunit beta (178 aa).

Belongs to the RNA polymerase beta chain family. In terms of assembly, the RNAP catalytic core consists of 2 alpha, 1 beta, 1 beta' and 1 omega subunit. When a sigma factor is associated with the core the holoenzyme is formed, which can initiate transcription.

It catalyses the reaction RNA(n) + a ribonucleoside 5'-triphosphate = RNA(n+1) + diphosphate. Functionally, DNA-dependent RNA polymerase catalyzes the transcription of DNA into RNA using the four ribonucleoside triphosphates as substrates. This Liberibacter asiaticus (Citrus greening disease) protein is DNA-directed RNA polymerase subunit beta (rpoB).